The primary structure comprises 263 residues: Shikimate dehydrogenase (NADP(+)) (263 aa).

Shikimate-binding positions include 16–18 and Thr65; that span reads SKS. The Proton acceptor role is filled by Lys69. Positions 90 and 105 each coordinate shikimate. NADP(+)-binding positions include 125 to 129, Ser181, and Leu208; that span reads GAGGS. A shikimate-binding site is contributed by Tyr210. Position 230 (Gly230) interacts with NADP(+). Shikimate is bound at residue Gln237.

This sequence belongs to the shikimate dehydrogenase family. As to quaternary structure, homodimer.

The enzyme catalyses shikimate + NADP(+) = 3-dehydroshikimate + NADPH + H(+). It functions in the pathway metabolic intermediate biosynthesis; chorismate biosynthesis; chorismate from D-erythrose 4-phosphate and phosphoenolpyruvate: step 4/7. In terms of biological role, involved in the biosynthesis of the chorismate, which leads to the biosynthesis of aromatic amino acids. Catalyzes the reversible NADPH linked reduction of 3-dehydroshikimate (DHSA) to yield shikimate (SA). In Helicobacter pylori (strain ATCC 700392 / 26695) (Campylobacter pylori), this protein is Shikimate dehydrogenase (NADP(+)).